The chain runs to 460 residues: Light-independent protochlorophyllide reductase subunit N (460 aa).

[4Fe-4S] cluster is bound by residues C22, C47, and C107.

The protein belongs to the BchN/ChlN family. As to quaternary structure, protochlorophyllide reductase is composed of three subunits; ChlL, ChlN and ChlB. Forms a heterotetramer of two ChlB and two ChlN subunits. It depends on [4Fe-4S] cluster as a cofactor.

The catalysed reaction is chlorophyllide a + oxidized 2[4Fe-4S]-[ferredoxin] + 2 ADP + 2 phosphate = protochlorophyllide a + reduced 2[4Fe-4S]-[ferredoxin] + 2 ATP + 2 H2O. The protein operates within porphyrin-containing compound metabolism; chlorophyll biosynthesis (light-independent). Component of the dark-operative protochlorophyllide reductase (DPOR) that uses Mg-ATP and reduced ferredoxin to reduce ring D of protochlorophyllide (Pchlide) to form chlorophyllide a (Chlide). This reaction is light-independent. The NB-protein (ChlN-ChlB) is the catalytic component of the complex. This chain is Light-independent protochlorophyllide reductase subunit N, found in Thermosynechococcus vestitus (strain NIES-2133 / IAM M-273 / BP-1).